We begin with the raw amino-acid sequence, 280 residues long: Putative pyruvate, phosphate dikinase regulatory protein 1 (280 aa).

152–159 (GVSRTSKT) lines the ADP pocket.

This sequence belongs to the pyruvate, phosphate/water dikinase regulatory protein family. PDRP subfamily.

It catalyses the reaction N(tele)-phospho-L-histidyl/L-threonyl-[pyruvate, phosphate dikinase] + ADP = N(tele)-phospho-L-histidyl/O-phospho-L-threonyl-[pyruvate, phosphate dikinase] + AMP + H(+). The enzyme catalyses N(tele)-phospho-L-histidyl/O-phospho-L-threonyl-[pyruvate, phosphate dikinase] + phosphate + H(+) = N(tele)-phospho-L-histidyl/L-threonyl-[pyruvate, phosphate dikinase] + diphosphate. Its function is as follows. Bifunctional serine/threonine kinase and phosphorylase involved in the regulation of the pyruvate, phosphate dikinase (PPDK) by catalyzing its phosphorylation/dephosphorylation. The protein is Putative pyruvate, phosphate dikinase regulatory protein 1 of Latilactobacillus sakei subsp. sakei (strain 23K) (Lactobacillus sakei subsp. sakei).